Reading from the N-terminus, the 306-residue chain is Ribosomal protein L11 methyltransferase (306 aa).

Positions 154, 179, 201, and 242 each coordinate S-adenosyl-L-methionine.

The protein belongs to the methyltransferase superfamily. PrmA family.

Its subcellular location is the cytoplasm. It carries out the reaction L-lysyl-[protein] + 3 S-adenosyl-L-methionine = N(6),N(6),N(6)-trimethyl-L-lysyl-[protein] + 3 S-adenosyl-L-homocysteine + 3 H(+). Its function is as follows. Methylates ribosomal protein L11. The polypeptide is Ribosomal protein L11 methyltransferase (Xanthomonas euvesicatoria pv. vesicatoria (strain 85-10) (Xanthomonas campestris pv. vesicatoria)).